Reading from the N-terminus, the 180-residue chain is Nucleoside-triphosphatase THEP1 (180 aa).

Residues 9-16 (GRPGIGKT) and 99-106 (VVIVDEVG) each bind ATP.

It belongs to the THEP1 NTPase family.

It catalyses the reaction a ribonucleoside 5'-triphosphate + H2O = a ribonucleoside 5'-diphosphate + phosphate + H(+). Its function is as follows. Has nucleotide phosphatase activity towards ATP, GTP, CTP, TTP and UTP. May hydrolyze nucleoside diphosphates with lower efficiency. This is Nucleoside-triphosphatase THEP1 from Methanopyrus kandleri (strain AV19 / DSM 6324 / JCM 9639 / NBRC 100938).